The primary structure comprises 325 residues: Phosphate acyltransferase (325 aa).

The protein belongs to the PlsX family. As to quaternary structure, homodimer. Probably interacts with PlsY.

It is found in the cytoplasm. The catalysed reaction is a fatty acyl-[ACP] + phosphate = an acyl phosphate + holo-[ACP]. It participates in lipid metabolism; phospholipid metabolism. Functionally, catalyzes the reversible formation of acyl-phosphate (acyl-PO(4)) from acyl-[acyl-carrier-protein] (acyl-ACP). This enzyme utilizes acyl-ACP as fatty acyl donor, but not acyl-CoA. This chain is Phosphate acyltransferase, found in Staphylococcus epidermidis (strain ATCC 12228 / FDA PCI 1200).